The primary structure comprises 177 residues: Adenine phosphoribosyltransferase (177 aa).

It belongs to the purine/pyrimidine phosphoribosyltransferase family. Homodimer.

Its subcellular location is the cytoplasm. It catalyses the reaction AMP + diphosphate = 5-phospho-alpha-D-ribose 1-diphosphate + adenine. It functions in the pathway purine metabolism; AMP biosynthesis via salvage pathway; AMP from adenine: step 1/1. Catalyzes a salvage reaction resulting in the formation of AMP, that is energically less costly than de novo synthesis. The polypeptide is Adenine phosphoribosyltransferase (Chlorobaculum tepidum (strain ATCC 49652 / DSM 12025 / NBRC 103806 / TLS) (Chlorobium tepidum)).